A 680-amino-acid polypeptide reads, in one-letter code: WD repeat-containing protein 48 homolog (680 aa).

WD repeat units lie at residues 26–65 (QHRNGVNALQLDANNGKLYSAGRDAIIRVWNTRTDSSEKY), 71–110 (HHNDWVNDIVLCCNGRNLISASCDTTVKVWNAQKGFCMST), 113–152 (THRDYVQALAYAKDREQVASAGLDKAIFLWDVNTLTALTA), 164–203 (GSKDSIYSLAMNPSGTVIVSGSTENILRIWDPRTCMRSMK), 206–245 (GHTENVRCLVVSPDGNQVVSGSSDGTIKVWNLGQQRCVQT), 248–287 (VHKEGVWSLLMSENFQYIISGSRDRNIIVTEMRNPSNKTL), 290–329 (EEQAPVLSLGYNIDKTGVWATTWNSDIRCWKLPMYDRCTM), and 350–389 (KGGAAIKECAVLNDKRYIITKDSQDQVVVYDVLRVVKKEQ). Residues 592-616 (ETTPSGGNANNSLQNSQSDANSEGS) form a disordered region.

The protein belongs to the WD repeat WDR48 family. In terms of assembly, catalytic component of the Usp12-46 deubiquitylase complex consisting of Usp12-46, Wdr20 and Uaf1; regulatory subunit that, together wtih Wdr20, stabilizes Usp12-46. The Usp12-46 deubiquitylase complex associates with arr/arrow; the interaction leads to deubiquitination and stabilization of arr/arrow.

Regulatory component of the Usp12-46 deubiquitylase complex. activates deubiquitination by increasing the catalytic turnover without increasing the affinity of deubiquitinating enzymes for the substrate. The complex deubiquitylates the wg/wingless-signaling receptor arr/arrow, which stabilizes the receptor and increases its concentration at the cell surface; this enhances the sensitivity of cells to wg/wingless-signal stimulation. This increases the amplitude and spatial range of the signaling response to the wg/wingless morphogen gradient, facilitating the precise concentration-dependent regulation of its target genes. Together with Wdr20 and Usp12-46 required for wg/wingless-mediated signaling in the wing imaginal disc and for wg/wingless-dependent regulation of intestinal stem cell proliferation. The polypeptide is WD repeat-containing protein 48 homolog (Drosophila erecta (Fruit fly)).